The following is a 579-amino-acid chain: Folliculin (579 aa).

The disordered stretch occupies residues 30–81 (PQGDGNEDSPGQGEQAEEEEGGIQMNSRMRAHSPAEGASVESSSPGPKKSDM). Serine 62 and serine 73 each carry phosphoserine. The uDENN FLCN/SMCR8-type domain occupies 86–242 (RSLAAGHPGY…RNGNAARSLT (157 aa)). The interval 210–220 (AEQFGCPQRAQ) is essential for interaction with LDHA. Positions 287–310 (EKLADLEEESESWDNSEAEEEEKA) form a coiled coil. The segment covering 294–308 (EESESWDNSEAEEEE) has biased composition (acidic residues). The tract at residues 294 to 337 (EESESWDNSEAEEEEKAPVLPESTEGRELTQGPAESSSLSGCGS) is disordered. The residue at position 302 (serine 302) is a Phosphoserine. Polar residues predominate over residues 326–336 (PAESSSLSGCG). Residues 339–491 (QPRKLPVFKS…ILNKIEAALT (153 aa)) enclose the cDENN FLCN/SMCR8-type domain. 3 positions are modified to phosphoserine; by ULK1: serine 406, serine 537, and serine 542. In terms of domain architecture, dDENN FLCN/SMCR8-type spans 493–558 (QNLSVDVVDQ…LLKFWMTGLS (66 aa)). A Phosphoserine modification is found at serine 571.

The protein belongs to the folliculin family. As to quaternary structure, interacts (via C-terminus) with FNIP1 or FNIP2 (via C-terminus). Component of the lysosomal folliculin complex (LFC), composed of FLCN, FNIP1 (or FNIP2), RagA/RRAGA or RagB/RRAGB GDP-bound, RagC/RRAGC or RagD/RRAGD GTP-bound, and Ragulator. Interaction with FNIP1 or FNIP2 mediates indirect interaction with the PRKAA1, PRKAB1 and PRKAG1 subunits of 5'-AMP-activated protein kinase (AMPK). Interacts with HSP90AA1 in the presence of FNIP1. Interacts with HSP70, STUB1, CDC37, AHSA1, CCT2, STIP1, PTGES3 and PPP5C. Interacts with GABARAP; interaction takes place in the presence of FNIP1 and/or FNIP2. Interacts with RILP; the interaction is direct and promotes association between RILP and RAB34. Interacts with KIF3A and KIF3B. Interacts with lactate dehydrogenase LDHA, but not LDHB; the interaction is direct, may preferentially bind LDHA dimers rather than tetramers, and regulates LDHA activity, acting as an uncompetitive inhibitor. Phosphorylation by ULK1 modulates the interaction with GABARAP and is required to regulate autophagy. As to expression, expressed in most tissues tested, including skin, lung, kidney, heart, testis and stomach.

Its subcellular location is the lysosome membrane. The protein localises to the cytoplasm. The protein resides in the cytosol. It localises to the cell projection. It is found in the cilium. Its subcellular location is the cytoskeleton. The protein localises to the microtubule organizing center. The protein resides in the centrosome. It localises to the spindle. It is found in the nucleus. Its activity is regulated as follows. GTPase-activating activity is inhibited in the folliculin complex (LFC), which stabilizes the GDP-bound state of RagA/RRAGA (or RagB/RRAGB), because Arg-164 is located far from the RagC/RRAGC or RagD/RRAGD nucleotide pocket. Disassembly of the LFC complex upon amino acid restimulation liberates the GTPase-activating activity. Multi-functional protein, involved in both the cellular response to amino acid availability and in the regulation of glycolysis. GTPase-activating protein that plays a key role in the cellular response to amino acid availability through regulation of the non-canonical mTORC1 signaling cascade controlling the MiT/TFE factors TFEB and TFE3. Activates mTORC1 by acting as a GTPase-activating protein: specifically stimulates GTP hydrolysis by RagC/RRAGC or RagD/RRAGD, promoting the conversion to the GDP-bound state of RagC/RRAGC or RagD/RRAGD, and thereby activating the kinase activity of mTORC1. The GTPase-activating activity is inhibited during starvation and activated in presence of nutrients. Acts as a key component for non-canonical mTORC1-dependent control of the MiT/TFE factors TFEB and TFE3, while it is not involved in mTORC1-dependent phosphorylation of canonical RPS6KB1/S6K1 and EIF4EBP1/4E-BP1. In low-amino acid conditions, the lysosomal folliculin complex (LFC) is formed on the membrane of lysosomes, which inhibits the GTPase-activating activity of FLCN, inactivates mTORC1 and maximizes nuclear translocation of TFEB and TFE3. Upon amino acid restimulation, RagA/RRAGA (or RagB/RRAGB) nucleotide exchange promotes disassembly of the LFC complex and liberates the GTPase-activating activity of FLCN, leading to activation of mTORC1 and subsequent cytoplasmic retention of TFEB and TFE3. Indirectly acts as a positive regulator of Wnt signaling by promoting mTOR-dependent cytoplasmic retention of MiT/TFE factor TFE3. Required for the exit of hematopoietic stem cell from pluripotency by promoting mTOR-dependent cytoplasmic retention of TFE3, thereby increasing Wnt signaling. Acts as an inhibitor of browning of adipose tissue by regulating mTOR-dependent cytoplasmic retention of TFE3. Involved in the control of embryonic stem cells differentiation; together with LAMTOR1 it is necessary to recruit and activate RagC/RRAGC and RagD/RRAGD at the lysosomes, and to induce exit of embryonic stem cells from pluripotency via non-canonical, mTOR-independent TFE3 inactivation. In response to flow stress, regulates STK11/LKB1 accumulation and mTORC1 activation through primary cilia: may act by recruiting STK11/LKB1 to primary cilia for activation of AMPK resided at basal bodies, causing mTORC1 down-regulation. Together with FNIP1 and/or FNIP2, regulates autophagy: following phosphorylation by ULK1, interacts with GABARAP and promotes autophagy. Required for starvation-induced perinuclear clustering of lysosomes by promoting association of RILP with its effector RAB34. Regulates glycolysis by binding to lactate dehydrogenase LDHA, acting as an uncompetitive inhibitor. This chain is Folliculin, found in Homo sapiens (Human).